The chain runs to 185 residues: Peptidyl-tRNA hydrolase (185 aa).

Tyr-14 lines the tRNA pocket. His-19 functions as the Proton acceptor in the catalytic mechanism. Phe-64, Asn-66, and Asn-112 together coordinate tRNA.

This sequence belongs to the PTH family. In terms of assembly, monomer.

It is found in the cytoplasm. It carries out the reaction an N-acyl-L-alpha-aminoacyl-tRNA + H2O = an N-acyl-L-amino acid + a tRNA + H(+). Hydrolyzes ribosome-free peptidyl-tRNAs (with 1 or more amino acids incorporated), which drop off the ribosome during protein synthesis, or as a result of ribosome stalling. Functionally, catalyzes the release of premature peptidyl moieties from peptidyl-tRNA molecules trapped in stalled 50S ribosomal subunits, and thus maintains levels of free tRNAs and 50S ribosomes. In Latilactobacillus sakei subsp. sakei (strain 23K) (Lactobacillus sakei subsp. sakei), this protein is Peptidyl-tRNA hydrolase.